Reading from the N-terminus, the 385-residue chain is Exopolygalacturonase rpg15 (385 aa).

The N-terminal stretch at 1–26 (MVRFISFTSPIAALLLLSFGVKHAST) is a signal peptide. Asn143, Asn161, Asn164, and Asn180 each carry an N-linked (GlcNAc...) asparagine glycan. 4 PbH1 repeats span residues 165 to 195 (STNLVLHDFTLHTVSNNSYLPKNTDALDLYH), 196 to 217 (SSGITFRDSMLTIGDDCVAIKE), 219 to 241 (VEKVIVSNVTCRGGHGYSIGSLG), and 249 to 270 (VKHVNFRNSTCIDCENGVRVKT). Asp210 functions as the Proton donor in the catalytic mechanism. Cys212 and Cys229 form a disulfide bridge. Asn226 carries N-linked (GlcNAc...) asparagine glycosylation. The active site involves His233. N-linked (GlcNAc...) asparagine glycosylation is found at Asn256, Asn319, and Asn343. Cysteines 344 and 350 form a disulfide. The PbH1 5 repeat unit spans residues 350-376 (CSDITFSGIDITKASNTTDNVCVYLEG). The N-linked (GlcNAc...) asparagine glycan is linked to Asn365.

This sequence belongs to the glycosyl hydrolase 28 family. Post-translationally, N-glycosylated.

Its subcellular location is the secreted. The catalysed reaction is [(1-&gt;4)-alpha-D-galacturonosyl](n) + H2O = alpha-D-galacturonate + [(1-&gt;4)-alpha-D-galacturonosyl](n-1). Its function is as follows. Specific in hydrolyzing the terminal glycosidic bond of polygalacturonic acid and oligogalacturonates. The chain is Exopolygalacturonase rpg15 from Rhizopus delemar (strain RA 99-880 / ATCC MYA-4621 / FGSC 9543 / NRRL 43880) (Mucormycosis agent).